A 696-amino-acid polypeptide reads, in one-letter code: DNA topoisomerase 6 subunit B (696 aa).

A disordered region spans residues 1–36 (MDDDAGDGAASGGTKRKVTAASSSAAAKGKAAGKGK). The segment covering 20–36 (AASSSAAAKGKAAGKGK) has biased composition (low complexity). ATP-binding positions include Asn-88, Asp-187, 208-209 (TK), 217-224 (GKFGLGAK), and Lys-543.

The protein belongs to the TOP6B family. In terms of assembly, homodimer. Heterotetramer of two TOP6A and two TOP6B subunits. Interacts with SPO11-2 and TOP6A3. In terms of tissue distribution, highly expressed in flowers before pollination. Expressed in roots and shoots.

It localises to the nucleus. It carries out the reaction ATP-dependent breakage, passage and rejoining of double-stranded DNA.. Functionally, component of the DNA topoisomerase VI involved in chromatin organization and progression of endoreduplication cycles. Relaxes both positive and negative superturns and exhibits a strong decatenase activity. The B subunit binds ATP. May be involved in cell proliferation and stress tolerance. In Oryza sativa subsp. indica (Rice), this protein is DNA topoisomerase 6 subunit B.